The following is a 196-amino-acid chain: Guanylate kinase (196 aa).

The segment at 1 to 24 (MPVESGAGNDQPKRLTVLSGPSGV) is disordered. Residues 13-191 (KRLTVLSGPS…VCDELLALIA (179 aa)) form the Guanylate kinase-like domain. Residue 20–27 (GPSGVGKS) coordinates ATP.

This sequence belongs to the guanylate kinase family.

The protein resides in the cytoplasm. The catalysed reaction is GMP + ATP = GDP + ADP. Functionally, essential for recycling GMP and indirectly, cGMP. The protein is Guanylate kinase of Thermobifida fusca (strain YX).